Reading from the N-terminus, the 501-residue chain is Dihydrolipoyl dehydrogenase, mitochondrial (501 aa).

The N-terminal 31 residues, 1–31, are a transit peptide targeting the mitochondrion; that stretch reads MAMANLARRKGYSLLSSETLRYSFSLRSRAF. FAD-binding positions include 67-76, K85, G149, and 178-180; these read EKRGALGGTC and TGS. Cysteines 76 and 81 form a disulfide. Residues 215–222, E238, V272, and G307 each bind NAD(+); that span reads GAGYIGLE. FAD-binding positions include D348 and 354-357; that span reads MLAH. H480 (proton acceptor) is an active-site residue.

It belongs to the class-I pyridine nucleotide-disulfide oxidoreductase family. As to quaternary structure, homodimer. The cofactor is FAD.

Its subcellular location is the mitochondrion matrix. It catalyses the reaction N(6)-[(R)-dihydrolipoyl]-L-lysyl-[protein] + NAD(+) = N(6)-[(R)-lipoyl]-L-lysyl-[protein] + NADH + H(+). Lipoamide dehydrogenase is a component of the glycine cleavage system as well as of the alpha-ketoacid dehydrogenase complexes. The pyruvate dehydrogenase complex contains multiple copies of three enzymatic components: pyruvate dehydrogenase (E1), dihydrolipoamide acetyltransferase (E2) and lipoamide dehydrogenase (E3). The protein is Dihydrolipoyl dehydrogenase, mitochondrial (LPD) of Pisum sativum (Garden pea).